The chain runs to 78 residues: Large ribosomal subunit protein uL24 (78 aa).

It belongs to the universal ribosomal protein uL24 family. Part of the 50S ribosomal subunit.

Functionally, one of two assembly initiator proteins, it binds directly to the 5'-end of the 23S rRNA, where it nucleates assembly of the 50S subunit. In terms of biological role, one of the proteins that surrounds the polypeptide exit tunnel on the outside of the subunit. The protein is Large ribosomal subunit protein uL24 of Campylobacter curvus (strain 525.92).